Consider the following 162-residue polypeptide: Precorrin-2 dehydrogenase (162 aa).

NAD(+) contacts are provided by residues 20-21 and 41-42; these read SI and PD.

Belongs to the precorrin-2 dehydrogenase / sirohydrochlorin ferrochelatase family.

It carries out the reaction precorrin-2 + NAD(+) = sirohydrochlorin + NADH + 2 H(+). Its pathway is cofactor biosynthesis; adenosylcobalamin biosynthesis; sirohydrochlorin from precorrin-2: step 1/1. The protein operates within porphyrin-containing compound metabolism; siroheme biosynthesis; sirohydrochlorin from precorrin-2: step 1/1. Its function is as follows. Catalyzes the dehydrogenation of precorrin-2 to form sirohydrochlorin which is used as a precursor in both siroheme biosynthesis and in the anaerobic branch of adenosylcobalamin biosynthesis. In Bacillus subtilis (strain 168), this protein is Precorrin-2 dehydrogenase (sirC).